We begin with the raw amino-acid sequence, 105 residues long: Large ribosomal subunit protein uL24 (105 aa).

It belongs to the universal ribosomal protein uL24 family. As to quaternary structure, part of the 50S ribosomal subunit.

Functionally, one of two assembly initiator proteins, it binds directly to the 5'-end of the 23S rRNA, where it nucleates assembly of the 50S subunit. One of the proteins that surrounds the polypeptide exit tunnel on the outside of the subunit. This is Large ribosomal subunit protein uL24 from Vibrio vulnificus (strain YJ016).